The chain runs to 1436 residues: DNA-directed RNA polymerase subunit beta (1436 aa).

The protein belongs to the RNA polymerase beta chain family. The RNAP catalytic core consists of 2 alpha, 1 beta, 1 beta' and 1 omega subunit. When a sigma factor is associated with the core the holoenzyme is formed, which can initiate transcription.

The catalysed reaction is RNA(n) + a ribonucleoside 5'-triphosphate = RNA(n+1) + diphosphate. Its function is as follows. DNA-dependent RNA polymerase catalyzes the transcription of DNA into RNA using the four ribonucleoside triphosphates as substrates. In Wolbachia pipientis, this protein is DNA-directed RNA polymerase subunit beta.